Reading from the N-terminus, the 236-residue chain is MTRRYWNINLKEMIEAGVHFGHGIKKWNPKMAPYISAKRKGTHIINLARTARFLSEACDLVFDAASQGKSFLIVGTKKRATDLVASAAIRARCHYVNKKWFSGMLTNWSITKTRLSQFRDLRAEEKMGKFHHLPKRDVAILKRKLSTLQRYLGGIKYMTRLPDIVIVLDQQKEYIALRECAILGIPTISLVDTNCDPDLANISIPANDDTMTSIRLILNKLVFSICEGRSLYIRNR.

This sequence belongs to the universal ribosomal protein uS2 family.

The protein localises to the plastid. The protein resides in the chloroplast. The polypeptide is Small ribosomal subunit protein uS2c (rps2) (Triticum aestivum (Wheat)).